Consider the following 237-residue polypeptide: Large ribosomal subunit protein uL2 (237 aa).

Polar residues predominate over residues 1-11; that stretch reads MGKRLISQNRG. Disordered stretches follow at residues 1 to 26 and 204 to 237; these read MGKRLISQNRGRGTPKYRSPSHKRKG and PYGGGRHQHLGKPSSVSRNTSPGRKVGHIASRRT. 2 stretches are compositionally biased toward basic residues: residues 13 to 26 and 228 to 237; these read GTPKYRSPSHKRKG and KVGHIASRRT.

The protein belongs to the universal ribosomal protein uL2 family. In terms of assembly, part of the 50S ribosomal subunit. Forms a bridge to the 30S subunit in the 70S ribosome.

In terms of biological role, one of the primary rRNA binding proteins. Required for association of the 30S and 50S subunits to form the 70S ribosome, for tRNA binding and peptide bond formation. It has been suggested to have peptidyltransferase activity; this is somewhat controversial. Makes several contacts with the 16S rRNA in the 70S ribosome. The chain is Large ribosomal subunit protein uL2 from Methanococcus vannielii.